The sequence spans 68 residues: DNA-directed RNA polymerase subunit Rpo10 (68 aa).

Zn(2+) is bound by residues Cys-7, Cys-10, Cys-44, and Cys-45.

This sequence belongs to the archaeal Rpo10/eukaryotic RPB10 RNA polymerase subunit family. In terms of assembly, part of the RNA polymerase complex. Requires Zn(2+) as cofactor.

The protein resides in the cytoplasm. It carries out the reaction RNA(n) + a ribonucleoside 5'-triphosphate = RNA(n+1) + diphosphate. In terms of biological role, DNA-dependent RNA polymerase (RNAP) catalyzes the transcription of DNA into RNA using the four ribonucleoside triphosphates as substrates. The sequence is that of DNA-directed RNA polymerase subunit Rpo10 from Methanococcus maripaludis (strain DSM 14266 / JCM 13030 / NBRC 101832 / S2 / LL).